Reading from the N-terminus, the 159-residue chain is MAEPRKSGLISHGIAAQNRKARFNYTIKDTVEAGIVLRGAEVKSLRMGRATLSEAFAGERDGEMYLFNMYIPEYQGGVLSRFDTKGPRKLLLKRKQIDQLLGAIARQGSTVVPLDVHFNPRGLAKVTLGIAEGRKQHDKRQAIAKRDWERDKARILKNR.

This sequence belongs to the SmpB family.

It is found in the cytoplasm. Required for rescue of stalled ribosomes mediated by trans-translation. Binds to transfer-messenger RNA (tmRNA), required for stable association of tmRNA with ribosomes. tmRNA and SmpB together mimic tRNA shape, replacing the anticodon stem-loop with SmpB. tmRNA is encoded by the ssrA gene; the 2 termini fold to resemble tRNA(Ala) and it encodes a 'tag peptide', a short internal open reading frame. During trans-translation Ala-aminoacylated tmRNA acts like a tRNA, entering the A-site of stalled ribosomes, displacing the stalled mRNA. The ribosome then switches to translate the ORF on the tmRNA; the nascent peptide is terminated with the 'tag peptide' encoded by the tmRNA and targeted for degradation. The ribosome is freed to recommence translation, which seems to be the essential function of trans-translation. This Acidiphilium cryptum (strain JF-5) protein is SsrA-binding protein.